Reading from the N-terminus, the 658-residue chain is Probable transketolase (658 aa).

H24 is a substrate binding site. Residues H64 and 113–115 (GPL) contribute to the thiamine diphosphate site. Mg(2+) is bound at residue D154. The thiamine diphosphate site is built by G155 and N184. Mg(2+) is bound by residues N184 and I186. The substrate site is built by H259, R354, and S381. H259 is a thiamine diphosphate binding site. Catalysis depends on E408, which acts as the Proton donor. F434 provides a ligand contact to thiamine diphosphate. The substrate site is built by H458, D466, and R517.

Belongs to the transketolase family. In terms of assembly, homodimer. Mg(2+) serves as cofactor. It depends on Ca(2+) as a cofactor. Requires Mn(2+) as cofactor. The cofactor is Co(2+). Thiamine diphosphate is required as a cofactor.

The enzyme catalyses D-sedoheptulose 7-phosphate + D-glyceraldehyde 3-phosphate = aldehydo-D-ribose 5-phosphate + D-xylulose 5-phosphate. Its function is as follows. Necessary for high-efficiency recombination chromosomal DNA during genetic transformation. Functionally, catalyzes the transfer of a two-carbon ketol group from a ketose donor to an aldose acceptor, via a covalent intermediate with the cofactor thiamine pyrophosphate. This chain is Probable transketolase (tkt), found in Streptococcus pneumoniae serotype 4 (strain ATCC BAA-334 / TIGR4).